Reading from the N-terminus, the 507-residue chain is ATP synthase subunit alpha (507 aa).

168–175 contributes to the ATP binding site; the sequence is GDRQTGKT.

Belongs to the ATPase alpha/beta chains family. In terms of assembly, F-type ATPases have 2 components, CF(1) - the catalytic core - and CF(0) - the membrane proton channel. CF(1) has five subunits: alpha(3), beta(3), gamma(1), delta(1), epsilon(1). CF(0) has three main subunits: a(1), b(2) and c(9-12). The alpha and beta chains form an alternating ring which encloses part of the gamma chain. CF(1) is attached to CF(0) by a central stalk formed by the gamma and epsilon chains, while a peripheral stalk is formed by the delta and b chains.

It localises to the cell membrane. The enzyme catalyses ATP + H2O + 4 H(+)(in) = ADP + phosphate + 5 H(+)(out). In terms of biological role, produces ATP from ADP in the presence of a proton gradient across the membrane. The alpha chain is a regulatory subunit. In Mesomycoplasma hyopneumoniae (strain J / ATCC 25934 / NCTC 10110) (Mycoplasma hyopneumoniae), this protein is ATP synthase subunit alpha.